We begin with the raw amino-acid sequence, 648 residues long: MTNFEPKKLKNIWTIEDSISTYNIDKWGDKYFSINSKGNISVTKDIKSENKIDLFKLVKELKSREINPPLIIRFNDILKDRINALHDSFFKAIKTYKYKNIYQGVFPVKCNQQKNVLEKIIEFGSQWNFGLEVGSKSELLIGLALLENQNSLLICNGYKDKKYIEIATLARKLGKNPIIVIEQRDEVKRIIQAVQELNATPLIGIRAKLSSKSSGRWGKSIGDNSKFGLSIPEIMLTIKELKEANLINEMKLLHFHIGSQISDIAVIKDALQEASQIYVELCKLGAPMQYIDVGGGLGIDFDGTKTSSNTSTNYSLQNYANDVIATIKDSCELNNIKHPIIISESGRAIISHCSVLIFNVLGTSHVSSKLQIFDKKNQQLIISNLLETFYELKKLKNKKINLSQIIELWNDAKKFKEDCLVAFRLGFLSLAERAYAEELTWACAKEISKNLNNDAINHPDLSEITETLASTYYANLSIFKSIPDSWAINQIFPIVPIHRHLEEPFCKGNFADLTCDSDGKLNNFIDDGKIKSLLNLHKPEEDKDYLIGIFMTGAYQEALGNLHNLFGSTNVVHIDINQDNSYKVKNIIKEDSKSEILQLLDYSSASLVESIRINTESAIDQKKLTIEEARKLMDQIEISLRKSSYLSE.

The residue at position 109 (Lys109) is an N6-(pyridoxal phosphate)lysine. Ile291 to Phe301 is a substrate binding site.

This sequence belongs to the Orn/Lys/Arg decarboxylase class-II family. SpeA subfamily. Requires Mg(2+) as cofactor. It depends on pyridoxal 5'-phosphate as a cofactor.

The enzyme catalyses L-arginine + H(+) = agmatine + CO2. The protein operates within amine and polyamine biosynthesis; agmatine biosynthesis; agmatine from L-arginine: step 1/1. Functionally, catalyzes the biosynthesis of agmatine from arginine. In Prochlorococcus marinus (strain MIT 9312), this protein is Biosynthetic arginine decarboxylase.